The sequence spans 192 residues: Aminodeoxychorismate synthase component 2 (192 aa).

Residues 3–192 (SVLMIDNCDS…LANLIHRPCH (190 aa)) form the Glutamine amidotransferase type-1 domain. Residues Cys83, His170, and Glu172 contribute to the active site.

In terms of assembly, monomer. Heterodimer consisting of two non-identical subunits: a glutamine amidotransferase subunit (PabA) and a aminodeoxychorismate synthase subunit (PabB).

The enzyme catalyses chorismate + L-glutamine = 4-amino-4-deoxychorismate + L-glutamate. It participates in cofactor biosynthesis; tetrahydrofolate biosynthesis; 4-aminobenzoate from chorismate: step 1/2. Its function is as follows. Part of a heterodimeric complex that catalyzes the two-step biosynthesis of 4-amino-4-deoxychorismate (ADC), a precursor of p-aminobenzoate (PABA) and tetrahydrofolate. In the first step, a glutamine amidotransferase (PabA) generates ammonia as a substrate that, along with chorismate, is used in the second step, catalyzed by aminodeoxychorismate synthase (PabB) to produce ADC. PabA converts glutamine into glutamate only in the presence of stoichiometric amounts of PabB. The polypeptide is Aminodeoxychorismate synthase component 2 (Streptomyces lividans).